Reading from the N-terminus, the 102-residue chain is NADH-quinone oxidoreductase subunit K (102 aa).

The next 3 membrane-spanning stretches (helical) occupy residues 3-23 (IGLT…AFGI), 31-51 (IVLL…LVAF), and 66-86 (FILT…VVYF).

This sequence belongs to the complex I subunit 4L family. In terms of assembly, NDH-1 is composed of 14 different subunits. Subunits NuoA, H, J, K, L, M, N constitute the membrane sector of the complex.

It is found in the cell inner membrane. The enzyme catalyses a quinone + NADH + 5 H(+)(in) = a quinol + NAD(+) + 4 H(+)(out). In terms of biological role, NDH-1 shuttles electrons from NADH, via FMN and iron-sulfur (Fe-S) centers, to quinones in the respiratory chain. The immediate electron acceptor for the enzyme in this species is believed to be ubiquinone. Couples the redox reaction to proton translocation (for every two electrons transferred, four hydrogen ions are translocated across the cytoplasmic membrane), and thus conserves the redox energy in a proton gradient. In Rhodospirillum centenum (strain ATCC 51521 / SW), this protein is NADH-quinone oxidoreductase subunit K.